The chain runs to 540 residues: Sterol 14-alpha demethylase (540 aa).

Residues 41–61 traverse the membrane as a helical segment; sequence PLFLVSGFLGVCVAYAVANII. Cysteine 485 is a heme binding site.

The protein belongs to the cytochrome P450 family. Heme is required as a cofactor.

Its subcellular location is the membrane. The enzyme catalyses a 14alpha-methyl steroid + 3 reduced [NADPH--hemoprotein reductase] + 3 O2 = a Delta(14) steroid + formate + 3 oxidized [NADPH--hemoprotein reductase] + 4 H2O + 4 H(+). The catalysed reaction is a 14alpha-methyl steroid + reduced [NADPH--hemoprotein reductase] + O2 = a 14alpha-hydroxymethyl steroid + oxidized [NADPH--hemoprotein reductase] + H2O + H(+). It catalyses the reaction a 14alpha-hydroxymethyl steroid + reduced [NADPH--hemoprotein reductase] + O2 = a 14alpha-formyl steroid + oxidized [NADPH--hemoprotein reductase] + 2 H2O + H(+). It carries out the reaction a 14alpha-formyl steroid + reduced [NADPH--hemoprotein reductase] + O2 = a Delta(14) steroid + formate + oxidized [NADPH--hemoprotein reductase] + H2O + 2 H(+). The enzyme catalyses lanosterol + 3 reduced [NADPH--hemoprotein reductase] + 3 O2 = 4,4-dimethyl-5alpha-cholesta-8,14,24-trien-3beta-ol + formate + 3 oxidized [NADPH--hemoprotein reductase] + 4 H2O + 4 H(+). The catalysed reaction is lanosterol + reduced [NADPH--hemoprotein reductase] + O2 = 32-hydroxylanosterol + oxidized [NADPH--hemoprotein reductase] + H2O + H(+). It catalyses the reaction 32-hydroxylanosterol + reduced [NADPH--hemoprotein reductase] + O2 = 32-oxolanosterol + oxidized [NADPH--hemoprotein reductase] + 2 H2O + H(+). It carries out the reaction 32-oxolanosterol + reduced [NADPH--hemoprotein reductase] + O2 = 4,4-dimethyl-5alpha-cholesta-8,14,24-trien-3beta-ol + formate + oxidized [NADPH--hemoprotein reductase] + H2O + 2 H(+). The enzyme catalyses eburicol + 3 reduced [NADPH--hemoprotein reductase] + 3 O2 = 14-demethyleburicol + formate + 3 oxidized [NADPH--hemoprotein reductase] + 4 H2O + 4 H(+). The catalysed reaction is eburicol + reduced [NADPH--hemoprotein reductase] + O2 = 32-hydroxyeburicol + oxidized [NADPH--hemoprotein reductase] + H2O + H(+). It catalyses the reaction 32-hydroxyeburicol + reduced [NADPH--hemoprotein reductase] + O2 = 32-oxoeburicol + oxidized [NADPH--hemoprotein reductase] + 2 H2O + H(+). It carries out the reaction 32-oxoeburicol + reduced [NADPH--hemoprotein reductase] + O2 = 14-demethyleburicol + formate + oxidized [NADPH--hemoprotein reductase] + H2O + 2 H(+). It functions in the pathway steroid biosynthesis; sterol biosynthesis. Functionally, sterol 14-alpha demethylase; part of the gene cluster that mediates the biosynthesis of tetrahydropyranyl antifungal agent lanomycin that acts as an inhibitor of CYP51 and blocks the ergosterol biosynthesis. Sterol 14-alpha-demethylase plays a critical role in the biosynthesis of ergosterol, the major sterol component in fungal membranes that participates in a variety of functions. Acts as a self-resistant CYP51 that contains mutations found in CYP51s isolated from azole resistance strains and that is not inhibited by the final product of the cluster, lanomycin. The sequence is that of Sterol 14-alpha demethylase from Pyrenophora dematioidea (Helminthosporium dematioideum).